The primary structure comprises 348 residues: Ion-translocating oxidoreductase complex subunit D (348 aa).

3 helical membrane passes run 25–45 (ILAALPGLAVQCYFFGWGTFI), 68–88 (PISPTLMDQSAVLTALLIGVA), and 124–144 (AMAAYVLLLVSFPVLMTTWAA). Thr182 carries the post-translational modification FMN phosphoryl threonine. A run of 5 helical transmembrane segments spans residues 211–231 (TGEGWFWVNLAYLCGGLFLLA), 237–257 (WHISGGLIGALFVCSLFGFGA), 263–283 (ASPLFNLFSGATMLAAFFIAT), 296–316 (LLFGAMIGVLIYLIRTFGGYP), and 317–337 (DGVAFAVLLANLCAPLIDYYI).

Belongs to the NqrB/RnfD family. In terms of assembly, the complex is composed of six subunits: RnfA, RnfB, RnfC, RnfD, RnfE and RnfG. It depends on FMN as a cofactor.

It is found in the cell inner membrane. Part of a membrane-bound complex that couples electron transfer with translocation of ions across the membrane. This chain is Ion-translocating oxidoreductase complex subunit D, found in Shewanella amazonensis (strain ATCC BAA-1098 / SB2B).